Here is a 62-residue protein sequence, read N- to C-terminus: Photosystem II reaction center protein Z (62 aa).

2 consecutive transmembrane segments (helical) span residues 8-28 and 41-61; these read AVFA…VVFA and FSGT…NSLI.

This sequence belongs to the PsbZ family. In terms of assembly, PSII is composed of 1 copy each of membrane proteins PsbA, PsbB, PsbC, PsbD, PsbE, PsbF, PsbH, PsbI, PsbJ, PsbK, PsbL, PsbM, PsbT, PsbY, PsbZ, Psb30/Ycf12, at least 3 peripheral proteins of the oxygen-evolving complex and a large number of cofactors. It forms dimeric complexes.

The protein localises to the plastid. The protein resides in the chloroplast thylakoid membrane. Its function is as follows. May control the interaction of photosystem II (PSII) cores with the light-harvesting antenna, regulates electron flow through the 2 photosystem reaction centers. PSII is a light-driven water plastoquinone oxidoreductase, using light energy to abstract electrons from H(2)O, generating a proton gradient subsequently used for ATP formation. The sequence is that of Photosystem II reaction center protein Z from Liriodendron tulipifera (Tuliptree).